We begin with the raw amino-acid sequence, 563 residues long: Arginine--tRNA ligase (563 aa).

Positions 120-130 (PNIAKPFHIGH) match the 'HIGH' region motif.

Belongs to the class-I aminoacyl-tRNA synthetase family. As to quaternary structure, monomer.

It is found in the cytoplasm. It carries out the reaction tRNA(Arg) + L-arginine + ATP = L-arginyl-tRNA(Arg) + AMP + diphosphate. The protein is Arginine--tRNA ligase of Clostridium botulinum (strain ATCC 19397 / Type A).